A 212-amino-acid chain; its full sequence is Protein-L-isoaspartate O-methyltransferase (212 aa).

S62 is a catalytic residue.

Belongs to the methyltransferase superfamily. L-isoaspartyl/D-aspartyl protein methyltransferase family.

The protein resides in the cytoplasm. It catalyses the reaction [protein]-L-isoaspartate + S-adenosyl-L-methionine = [protein]-L-isoaspartate alpha-methyl ester + S-adenosyl-L-homocysteine. Functionally, catalyzes the methyl esterification of L-isoaspartyl residues in peptides and proteins that result from spontaneous decomposition of normal L-aspartyl and L-asparaginyl residues. It plays a role in the repair and/or degradation of damaged proteins. In Pseudoalteromonas translucida (strain TAC 125), this protein is Protein-L-isoaspartate O-methyltransferase.